The sequence spans 185 residues: Large ribosomal subunit protein uL5 (185 aa).

It belongs to the universal ribosomal protein uL5 family. In terms of assembly, part of the 50S ribosomal subunit; part of the 5S rRNA/L5/L18/L25 subcomplex. Contacts the 5S rRNA and the P site tRNA. Forms a bridge to the 30S subunit in the 70S ribosome.

This is one of the proteins that bind and probably mediate the attachment of the 5S RNA into the large ribosomal subunit, where it forms part of the central protuberance. In the 70S ribosome it contacts protein S13 of the 30S subunit (bridge B1b), connecting the 2 subunits; this bridge is implicated in subunit movement. Contacts the P site tRNA; the 5S rRNA and some of its associated proteins might help stabilize positioning of ribosome-bound tRNAs. This is Large ribosomal subunit protein uL5 from Rhodopseudomonas palustris (strain HaA2).